Reading from the N-terminus, the 205-residue chain is uncharacterized protein (205 aa).

Active-site charge relay system residues include Ser-119 and His-160.

It belongs to the peptidase S51 family.

This is an uncharacterized protein from Listeria monocytogenes serovar 1/2a (strain ATCC BAA-679 / EGD-e).